The sequence spans 117 residues: Putative pterin-4-alpha-carbinolamine dehydratase (117 aa).

It belongs to the pterin-4-alpha-carbinolamine dehydratase family.

It carries out the reaction (4aS,6R)-4a-hydroxy-L-erythro-5,6,7,8-tetrahydrobiopterin = (6R)-L-erythro-6,7-dihydrobiopterin + H2O. The chain is Putative pterin-4-alpha-carbinolamine dehydratase from Azoarcus sp. (strain BH72).